A 508-amino-acid polypeptide reads, in one-letter code: Photosystem II CP47 reaction center protein (508 aa).

A run of 6 helical transmembrane segments spans residues 21 to 36 (SVHI…WAGS), 101 to 115 (IVFS…IWHW), 140 to 156 (GIHL…FGAF), 203 to 218 (IAAG…FHLS), 237 to 252 (VLSS…AFIV), and 457 to 472 (SFAL…HGAR).

This sequence belongs to the PsbB/PsbC family. PsbB subfamily. PSII is composed of 1 copy each of membrane proteins PsbA, PsbB, PsbC, PsbD, PsbE, PsbF, PsbH, PsbI, PsbJ, PsbK, PsbL, PsbM, PsbT, PsbX, PsbY, PsbZ, Psb30/Ycf12, at least 3 peripheral proteins of the oxygen-evolving complex and a large number of cofactors. It forms dimeric complexes. Requires Binds multiple chlorophylls. PSII binds additional chlorophylls, carotenoids and specific lipids. as cofactor.

It localises to the plastid. The protein localises to the chloroplast thylakoid membrane. One of the components of the core complex of photosystem II (PSII). It binds chlorophyll and helps catalyze the primary light-induced photochemical processes of PSII. PSII is a light-driven water:plastoquinone oxidoreductase, using light energy to abstract electrons from H(2)O, generating O(2) and a proton gradient subsequently used for ATP formation. The polypeptide is Photosystem II CP47 reaction center protein (Amborella trichopoda).